Consider the following 395-residue polypeptide: Putative 8-amino-7-oxononanoate synthase (395 aa).

Substrate is bound at residue Arg23. 110–111 (GY) provides a ligand contact to pyridoxal 5'-phosphate. His135 serves as a coordination point for substrate. Pyridoxal 5'-phosphate-binding positions include Ser182, 207 to 210 (DEAH), and 239 to 242 (TFSK). Lys242 is subject to N6-(pyridoxal phosphate)lysine. Thr356 contacts substrate.

It belongs to the class-II pyridoxal-phosphate-dependent aminotransferase family. BioF subfamily. As to quaternary structure, homodimer. It depends on pyridoxal 5'-phosphate as a cofactor.

It carries out the reaction 6-carboxyhexanoyl-[ACP] + L-alanine + H(+) = (8S)-8-amino-7-oxononanoate + holo-[ACP] + CO2. It participates in cofactor biosynthesis; biotin biosynthesis. Its function is as follows. Catalyzes the decarboxylative condensation of pimeloyl-[acyl-carrier protein] and L-alanine to produce 8-amino-7-oxononanoate (AON), [acyl-carrier protein], and carbon dioxide. The polypeptide is Putative 8-amino-7-oxononanoate synthase (bioF) (Bacillus mycoides (strain KBAB4) (Bacillus weihenstephanensis)).